The sequence spans 71 residues: MSYFRRRLSPIKPGEPIDYKDVDLLRKFVTERGKILPRRITGLTSQQQRELTLAIKRSRIVALLPFINAEG.

This sequence belongs to the bacterial ribosomal protein bS18 family. In terms of assembly, part of the 30S ribosomal subunit. Forms a tight heterodimer with protein bS6.

Functionally, binds as a heterodimer with protein bS6 to the central domain of the 16S rRNA, where it helps stabilize the platform of the 30S subunit. The chain is Small ribosomal subunit protein bS18 from Nostoc punctiforme (strain ATCC 29133 / PCC 73102).